The following is a 113-amino-acid chain: Nucleoid-associated protein Athe_1143 (113 aa).

It belongs to the YbaB/EbfC family. As to quaternary structure, homodimer.

The protein localises to the cytoplasm. The protein resides in the nucleoid. Functionally, binds to DNA and alters its conformation. May be involved in regulation of gene expression, nucleoid organization and DNA protection. The sequence is that of Nucleoid-associated protein Athe_1143 from Caldicellulosiruptor bescii (strain ATCC BAA-1888 / DSM 6725 / KCTC 15123 / Z-1320) (Anaerocellum thermophilum).